Here is a 519-residue protein sequence, read N- to C-terminus: Glutamate--cysteine ligase (519 aa).

This sequence belongs to the glutamate--cysteine ligase type 1 family. Type 1 subfamily.

It carries out the reaction L-cysteine + L-glutamate + ATP = gamma-L-glutamyl-L-cysteine + ADP + phosphate + H(+). The protein operates within sulfur metabolism; glutathione biosynthesis; glutathione from L-cysteine and L-glutamate: step 1/2. The polypeptide is Glutamate--cysteine ligase (Photorhabdus laumondii subsp. laumondii (strain DSM 15139 / CIP 105565 / TT01) (Photorhabdus luminescens subsp. laumondii)).